Reading from the N-terminus, the 590-residue chain is Potassium-transporting ATPase potassium-binding subunit (590 aa).

The next 10 helical transmembrane spans lie at 11-31, 64-84, 136-156, 178-198, 273-293, 301-321, 403-423, 442-462, 511-531, and 552-572; these read IFIAAVLLGAKPLGVYMAAVF, TAYCASMLIFSAATMLLTYLI, GLATHNFWSAAVGIALAIAFI, ILWVLLPICVVFALVLTSQGV, MLEMISIFLIPAGLTVTLGQM, WAVLGAMLILWFAGVATCYWA, AGLYGMLVFVIVAVFIAGLMV, AMLYLLIFPLIILGFSAVAVL, LGFAMFIGRFLMIVPMLALAG, and LFTVLLTSVIIVVGALTFLPA.

It belongs to the KdpA family. In terms of assembly, the system is composed of three essential subunits: KdpA, KdpB and KdpC.

The protein localises to the cell inner membrane. In terms of biological role, part of the high-affinity ATP-driven potassium transport (or Kdp) system, which catalyzes the hydrolysis of ATP coupled with the electrogenic transport of potassium into the cytoplasm. This subunit binds the periplasmic potassium ions and delivers the ions to the membrane domain of KdpB through an intramembrane tunnel. This chain is Potassium-transporting ATPase potassium-binding subunit, found in Acidobacterium capsulatum (strain ATCC 51196 / DSM 11244 / BCRC 80197 / JCM 7670 / NBRC 15755 / NCIMB 13165 / 161).